A 790-amino-acid chain; its full sequence is Phenylalanine--tRNA ligase beta subunit (790 aa).

The region spanning 40–149 is the tRNA-binding domain; that stretch reads AEKVSGVVVG…IDAPVGTDIN (110 aa). Positions 402 to 479 constitute a B5 domain; that stretch reads NKQIKINLSI…RIYGYSKLPE (78 aa). The Mg(2+) site is built by D457, D463, E466, and E467. Residues 698 to 789 enclose the FDX-ACB domain; sequence SKYPSVSRDI…LKTKFNIEQR (92 aa).

Belongs to the phenylalanyl-tRNA synthetase beta subunit family. Type 1 subfamily. In terms of assembly, tetramer of two alpha and two beta subunits. Requires Mg(2+) as cofactor.

Its subcellular location is the cytoplasm. It carries out the reaction tRNA(Phe) + L-phenylalanine + ATP = L-phenylalanyl-tRNA(Phe) + AMP + diphosphate + H(+). The protein is Phenylalanine--tRNA ligase beta subunit of Francisella tularensis subsp. tularensis (strain SCHU S4 / Schu 4).